The sequence spans 282 residues: Blarina toxin (282 aa).

Residues 1–17 (MCFLLLCLTLTLAGTGA) form the signal peptide. The propeptide at 18–29 (VPTGPSIEIHSR) is activation peptide. One can recognise a Peptidase S1 domain in the interval 30–279 (IIGGWECDKH…YISWIQETIK (250 aa)). Disulfide bonds link Cys36–Cys194, Cys57–Cys73, Cys170–Cys240, Cys205–Cys219, and Cys230–Cys255. The active-site Charge relay system is the His72. Ser100 carries an O-linked (GalNAc...) serine glycan. Residues Asn109 and Asn122 are each glycosylated (N-linked (GlcNAc...) asparagine). Asp138 acts as the Charge relay system in catalysis. The Charge relay system role is filled by Ser234.

It belongs to the peptidase S1 family. Kallikrein subfamily. As to expression, submaxillary and sublingual salivary glands.

It is found in the secreted. Its activity is regulated as follows. Strongly inhibited by aprotinin, moderately inhibited by secretory leukoprotease inhibitor, the Kunitz-type soybean trypsin inhibitor, and leupeptin, and not inhibited by urinary trypsin inhibitor or alpha-1 protease inhibitor. Its function is as follows. Has kallikrein-like activity, converts kininogens to kinins, and has dilatory effects on the blood vessel walls. Shows highest activity toward Pro-Phe-Arg-MCA and Boc-Val-Leu-Lys-MCA in vitro. Has preference for Arg and Lys in position P1 and hydrophobic residues in position P2. This chain is Blarina toxin (BTX), found in Blarina brevicauda (Northern short-tailed shrew).